The sequence spans 632 residues: POU domain, class 2, transcription factor 1 (632 aa).

Phosphothreonine occurs at positions 157 and 163. The region spanning 167–241 is the POU-specific domain; that stretch reads EEPSDLEELE…LLEKWLNDAE (75 aa). Residue serine 170 is modified to Phosphoserine. Residues 243-258 show a composition bias toward low complexity; it reads LSSDSTASSPSALNSP. The segment at 243-273 is disordered; the sequence is LSSDSTASSPSALNSPGLGAEGLNRRRKKRT. A DNA-binding region (homeobox) is located at residues 268-327; the sequence is RRKKRTSIETNIRVALEKSFMENQKPTSEDITLIAEQLNMEKEVIRVWFCNRRQKEKRIN. Phosphoserine occurs at positions 274 and 337. The interval 385–448 is disordered; that stretch reads GTTDSTSNNT…STPLPSPLGA (64 aa). Over residues 394–441 the composition is skewed to low complexity; sequence TATVISTAPPASSAVTSPSLSPSPSASASTSEASSASETSTTQTTSTP.

The protein belongs to the POU transcription factor family. Class-2 subfamily. Interacts with POU2AF1; the interaction increases POU2F1 transactivation activity. Interacts with NR3C1, AR, PGR and HCFC1. In terms of processing, phosphorylated by PRKDC. As to expression, widely expressed.

It localises to the nucleus. In terms of biological role, transcription factor that binds to the octamer motif (5'-ATTTGCAT-3') and activates the promoters of the genes for some small nuclear RNAs (snRNA) and of genes such as those for histone H2B and immunoglobulins. Modulates transcription transactivation by NR3C1, AR and PGR. The chain is POU domain, class 2, transcription factor 1 (Pou2f1) from Rattus norvegicus (Rat).